The primary structure comprises 138 residues: ATP synthase epsilon chain (138 aa).

Belongs to the ATPase epsilon chain family. In terms of assembly, F-type ATPases have 2 components, CF(1) - the catalytic core - and CF(0) - the membrane proton channel. CF(1) has five subunits: alpha(3), beta(3), gamma(1), delta(1), epsilon(1). CF(0) has three main subunits: a, b and c.

It localises to the cell inner membrane. Its function is as follows. Produces ATP from ADP in the presence of a proton gradient across the membrane. This chain is ATP synthase epsilon chain, found in Citrifermentans bemidjiense (strain ATCC BAA-1014 / DSM 16622 / JCM 12645 / Bem) (Geobacter bemidjiensis).